Here is a 559-residue protein sequence, read N- to C-terminus: 2-succinyl-5-enolpyruvyl-6-hydroxy-3-cyclohexene-1-carboxylate synthase (559 aa).

The protein belongs to the TPP enzyme family. MenD subfamily. As to quaternary structure, homodimer. It depends on Mg(2+) as a cofactor. Mn(2+) serves as cofactor. The cofactor is thiamine diphosphate.

It carries out the reaction isochorismate + 2-oxoglutarate + H(+) = 5-enolpyruvoyl-6-hydroxy-2-succinyl-cyclohex-3-ene-1-carboxylate + CO2. The protein operates within quinol/quinone metabolism; 1,4-dihydroxy-2-naphthoate biosynthesis; 1,4-dihydroxy-2-naphthoate from chorismate: step 2/7. Its pathway is quinol/quinone metabolism; menaquinone biosynthesis. In terms of biological role, catalyzes the thiamine diphosphate-dependent decarboxylation of 2-oxoglutarate and the subsequent addition of the resulting succinic semialdehyde-thiamine pyrophosphate anion to isochorismate to yield 2-succinyl-5-enolpyruvyl-6-hydroxy-3-cyclohexene-1-carboxylate (SEPHCHC). The polypeptide is 2-succinyl-5-enolpyruvyl-6-hydroxy-3-cyclohexene-1-carboxylate synthase (Cytophaga hutchinsonii (strain ATCC 33406 / DSM 1761 / CIP 103989 / NBRC 15051 / NCIMB 9469 / D465)).